Here is a 232-residue protein sequence, read N- to C-terminus: 7-cyano-7-deazaguanine synthase (232 aa).

7–17 (CSGGLDSVSLA) lines the ATP pocket. Cysteine 185, cysteine 193, cysteine 196, and cysteine 199 together coordinate Zn(2+).

This sequence belongs to the QueC family. The cofactor is Zn(2+).

The enzyme catalyses 7-carboxy-7-deazaguanine + NH4(+) + ATP = 7-cyano-7-deazaguanine + ADP + phosphate + H2O + H(+). It functions in the pathway purine metabolism; 7-cyano-7-deazaguanine biosynthesis. Functionally, catalyzes the ATP-dependent conversion of 7-carboxy-7-deazaguanine (CDG) to 7-cyano-7-deazaguanine (preQ(0)). The protein is 7-cyano-7-deazaguanine synthase of Chelativorans sp. (strain BNC1).